Here is a 374-residue protein sequence, read N- to C-terminus: Ribosomal RNA large subunit methyltransferase G (374 aa).

The protein belongs to the methyltransferase superfamily. RlmG family.

The protein resides in the cytoplasm. The catalysed reaction is guanosine(1835) in 23S rRNA + S-adenosyl-L-methionine = N(2)-methylguanosine(1835) in 23S rRNA + S-adenosyl-L-homocysteine + H(+). Its function is as follows. Specifically methylates the guanine in position 1835 (m2G1835) of 23S rRNA. The protein is Ribosomal RNA large subunit methyltransferase G of Pseudomonas putida (strain W619).